Here is a 621-residue protein sequence, read N- to C-terminus: tRNA uridine 5-carboxymethylaminomethyl modification enzyme MnmG (621 aa).

9–14 (GGGHAG) is an FAD binding site. NAD(+) is bound at residue 270-284 (GPRYCPSIEDKIVKF).

The protein belongs to the MnmG family. Homodimer. Heterotetramer of two MnmE and two MnmG subunits. It depends on FAD as a cofactor.

It is found in the cytoplasm. Functionally, NAD-binding protein involved in the addition of a carboxymethylaminomethyl (cmnm) group at the wobble position (U34) of certain tRNAs, forming tRNA-cmnm(5)s(2)U34. The chain is tRNA uridine 5-carboxymethylaminomethyl modification enzyme MnmG from Borreliella burgdorferi (strain ATCC 35210 / DSM 4680 / CIP 102532 / B31) (Borrelia burgdorferi).